We begin with the raw amino-acid sequence, 452 residues long: Exodeoxyribonuclease 7 large subunit (452 aa).

It belongs to the XseA family. Heterooligomer composed of large and small subunits.

Its subcellular location is the cytoplasm. It catalyses the reaction Exonucleolytic cleavage in either 5'- to 3'- or 3'- to 5'-direction to yield nucleoside 5'-phosphates.. Its function is as follows. Bidirectionally degrades single-stranded DNA into large acid-insoluble oligonucleotides, which are then degraded further into small acid-soluble oligonucleotides. The polypeptide is Exodeoxyribonuclease 7 large subunit (Bordetella avium (strain 197N)).